The sequence spans 639 residues: Threonine--tRNA ligase (639 aa).

Positions 1-61 constitute a TGS domain; sequence MINITLKDGK…KEDSELEILT (61 aa). Residues 242–532 are catalytic; sequence DHRKLGKELD…LIEHFAGAFP (291 aa). Zn(2+) contacts are provided by Cys-333, His-384, and His-509.

This sequence belongs to the class-II aminoacyl-tRNA synthetase family. In terms of assembly, homodimer. The cofactor is Zn(2+).

It is found in the cytoplasm. The enzyme catalyses tRNA(Thr) + L-threonine + ATP = L-threonyl-tRNA(Thr) + AMP + diphosphate + H(+). Its function is as follows. Catalyzes the attachment of threonine to tRNA(Thr) in a two-step reaction: L-threonine is first activated by ATP to form Thr-AMP and then transferred to the acceptor end of tRNA(Thr). Also edits incorrectly charged L-seryl-tRNA(Thr). This is Threonine--tRNA ligase from Clostridium tetani (strain Massachusetts / E88).